The primary structure comprises 86 residues: Small ribosomal subunit protein bS16 (86 aa).

The protein belongs to the bacterial ribosomal protein bS16 family.

The chain is Small ribosomal subunit protein bS16 from Thermoanaerobacter sp. (strain X514).